We begin with the raw amino-acid sequence, 305 residues long: UDP-3-O-acyl-N-acetylglucosamine deacetylase (305 aa).

The Zn(2+) site is built by H79, H238, and D242. The active-site Proton donor is the H265.

The protein belongs to the LpxC family. Zn(2+) serves as cofactor.

It carries out the reaction a UDP-3-O-[(3R)-3-hydroxyacyl]-N-acetyl-alpha-D-glucosamine + H2O = a UDP-3-O-[(3R)-3-hydroxyacyl]-alpha-D-glucosamine + acetate. Its pathway is glycolipid biosynthesis; lipid IV(A) biosynthesis; lipid IV(A) from (3R)-3-hydroxytetradecanoyl-[acyl-carrier-protein] and UDP-N-acetyl-alpha-D-glucosamine: step 2/6. Its function is as follows. Catalyzes the hydrolysis of UDP-3-O-myristoyl-N-acetylglucosamine to form UDP-3-O-myristoylglucosamine and acetate, the committed step in lipid A biosynthesis. The protein is UDP-3-O-acyl-N-acetylglucosamine deacetylase of Actinobacillus succinogenes (strain ATCC 55618 / DSM 22257 / CCUG 43843 / 130Z).